The chain runs to 336 residues: Sodium/bile acid cotransporter 7 (336 aa).

Topologically, residues 1 to 10 are cytoplasmic; that stretch reads MGLIARVRKE. Residues 11-31 form a helical membrane-spanning segment; that stretch reads WFIIGIVLVITFAKLQPSVGV. The Extracellular portion of the chain corresponds to 32–37; the sequence is KGGPLH. The chain crosses the membrane as a helical span at residues 38 to 58; that stretch reads PEITITYVAVSVIFFNSGLSL. Residues 59 to 71 are Cytoplasmic-facing; the sequence is KTEELASALMHVK. Residues 72 to 92 traverse the membrane as a helical segment; sequence LHFFVQTFTLVFFPIAIWLLL. Residues 93–116 are Extracellular-facing; sequence KVLALTAINEWLLRGLQTVACMPP. The chain crosses the membrane as a helical span at residues 117–137; that stretch reads PVSSAVILTKAVGGNEAAAIF. Position 138 (Asn138) is a topological domain, cytoplasmic. A helical membrane pass occupies residues 139–159; the sequence is SAFGSFLGIVVTPLLLLVFLG. Residues 160-163 are Extracellular-facing; it reads SSSS. Residues 164–184 traverse the membrane as a helical segment; sequence VPFTSIFSQLFMTVVVPLIVG. Residues 185–201 lie on the Cytoplasmic side of the membrane; it reads QVCRRFLRECLDRRKPP. Residues 202–222 traverse the membrane as a helical segment; the sequence is FGAVSSVVLLMIIYSTFCDTF. Residues 223–233 are Extracellular-facing; sequence NNPNIELDHLS. The helical transmembrane segment at 234–254 threads the bilayer; that stretch reads LLTVVFIIFSIQLSFMALIFF. Residues 255 to 270 are Cytoplasmic-facing; sequence LSTRKSSGFSAADSVA. Residues 271–291 traverse the membrane as a helical segment; sequence IMFCATHKSLTLGIPMLKIVF. At 292–298 the chain is on the extracellular side; that stretch reads EGYEHLS. The chain crosses the membrane as a helical span at residues 299-319; the sequence is LISVPLLIYHPAQILLGSVLL. Topologically, residues 320–336 are cytoplasmic; sequence PSIKTWMSGRQKTLTPI.

Belongs to the bile acid:sodium symporter (BASS) (TC 2.A.28) family.

The protein localises to the cell membrane. Its subcellular location is the endoplasmic reticulum membrane. It localises to the golgi apparatus membrane. Involved in teeth and skeletal development. Has an essential role in the biosynthesis and trafficking of glycosaminoglycans and glycoproteins to produce a proper functioning extracellular matrix. Required for extracellular matrix mineralization. Also involved in the regulation of cellular calcium homeostasis. Does not show transport activity towards bile acids or steroid sulfates. The protein is Sodium/bile acid cotransporter 7 (slc10a7) of Danio rerio (Zebrafish).